The primary structure comprises 365 residues: Peptide chain release factor 2 (365 aa).

An N5-methylglutamine modification is found at Gln-252.

The protein belongs to the prokaryotic/mitochondrial release factor family. Methylated by PrmC. Methylation increases the termination efficiency of RF2.

It is found in the cytoplasm. Functionally, peptide chain release factor 2 directs the termination of translation in response to the peptide chain termination codons UGA and UAA. The polypeptide is Peptide chain release factor 2 (Haemophilus ducreyi (strain 35000HP / ATCC 700724)).